Consider the following 341-residue polypeptide: Fructose-1,6-bisphosphatase, cytosolic (341 aa).

5 residues coordinate Mg(2+): glutamate 71, glutamate 100, aspartate 121, leucine 123, and aspartate 124. Substrate-binding positions include 124–127, asparagine 215, tyrosine 247, tyrosine 267, and lysine 277; that span reads DGSF. Residue glutamate 283 participates in Mg(2+) binding.

It belongs to the FBPase class 1 family. The cofactor is Mg(2+).

Its subcellular location is the cytoplasm. It catalyses the reaction beta-D-fructose 1,6-bisphosphate + H2O = beta-D-fructose 6-phosphate + phosphate. This Pisum sativum (Garden pea) protein is Fructose-1,6-bisphosphatase, cytosolic.